The primary structure comprises 77 residues: MKKLVIALCLMMVLAVMVEEAEAKWCFRVCYRGICYRRCRGKRNEVRQYRDRGYDVRAIPEETFFTRQDEDEDDDEE.

An N-terminal signal peptide occupies residues 1–23 (MKKLVIALCLMMVLAVMVEEAEA). Intrachain disulfides connect Cys26–Cys39 and Cys30–Cys35. Arg40 is modified (arginine amide). Positions 41–77 (GKRNEVRQYRDRGYDVRAIPEETFFTRQDEDEDDDEE) are excised as a propeptide.

The protein belongs to the tachyplesin/polyphemusin family. As to expression, hemocytes.

The protein resides in the secreted. Its function is as follows. Significantly inhibits the growth of Gram-negative and Gram-positive bacteria. In Tachypleus tridentatus (Japanese horseshoe crab), this protein is Tachyplesin-1.